The primary structure comprises 385 residues: Ethanolamine kinase 2 (385 aa).

Belongs to the choline/ethanolamine kinase family. In terms of tissue distribution, expressed in testis and liver. Low expression in ovary and kidney.

The enzyme catalyses ethanolamine + ATP = phosphoethanolamine + ADP + H(+). Its pathway is phospholipid metabolism; phosphatidylethanolamine biosynthesis; phosphatidylethanolamine from ethanolamine: step 1/3. In terms of biological role, highly specific for ethanolamine phosphorylation. Does not have choline kinase activity. This chain is Ethanolamine kinase 2 (Etnk2), found in Mus musculus (Mouse).